The sequence spans 392 residues: Phosphoglycerate kinase (392 aa).

Residues 21–23 (DMN), R36, 59–62 (HLGR), R114, and R147 contribute to the substrate site. ATP contacts are provided by residues K198, E320, and 346-349 (GGDT).

Belongs to the phosphoglycerate kinase family. Monomer.

The protein localises to the cytoplasm. The catalysed reaction is (2R)-3-phosphoglycerate + ATP = (2R)-3-phospho-glyceroyl phosphate + ADP. It participates in carbohydrate degradation; glycolysis; pyruvate from D-glyceraldehyde 3-phosphate: step 2/5. The sequence is that of Phosphoglycerate kinase from Neisseria meningitidis serogroup C (strain 053442).